Consider the following 140-residue polypeptide: 3-hydroxyacyl-[acyl-carrier-protein] dehydratase FabZ (140 aa).

Histidine 47 is a catalytic residue.

This sequence belongs to the thioester dehydratase family. FabZ subfamily.

Its subcellular location is the cytoplasm. It carries out the reaction a (3R)-hydroxyacyl-[ACP] = a (2E)-enoyl-[ACP] + H2O. Its function is as follows. Involved in unsaturated fatty acids biosynthesis. Catalyzes the dehydration of short chain beta-hydroxyacyl-ACPs and long chain saturated and unsaturated beta-hydroxyacyl-ACPs. The protein is 3-hydroxyacyl-[acyl-carrier-protein] dehydratase FabZ of Streptococcus sanguinis (strain SK36).